The primary structure comprises 63 residues: MNYIDLKDKSEAELLAMLKEKKLELFTLNAKQKTMQLTNTSELRVAKKDIARIQTALTAARAK.

Belongs to the universal ribosomal protein uL29 family.

This is Large ribosomal subunit protein uL29 from Sulfurovum sp. (strain NBC37-1).